The primary structure comprises 1729 residues: MSKIRRKVTVENTKTISESTSRRPSVFERLGPSTGSTTETQCRNWLKTGSCLYGNTCRFIHGPSPRGKGYSSNYRRSPERPTGDLRERMKNKRQDVDSESQKRNTEEPSSPVRKESSRGRHRDKEDIKIVKERTPESEEENVEWETNRDDSDNGDINYDYVHELSLEMKRQKIQRELMKLEQENMDKREEIIIQKEVSPEVVRSKLSPSPSLRKSSKSPKRKSSPKASSAGKKERKAAVVASPLLDQQRNSKGNQSKKKGPRTPSPPPPILEDIILGKKYKEKYKVKDRIEEKPRDGKDRGRDFEKQREKRDKPRSSSPGQHHSPLSSRHHSSSSQSGSSIQRHSPSPRRKRTPSPSYQRTLTPSLRRSASPYPTHCLSSPQRKQSPPRHRSPMREKGRHDHERTSQSHDRRHERREETRGKRDREKDTREERESEHDHRDDREPRDSRDRRDTRDRRELRDSRDMRDSREMRDYSRDAKESRDPRDSRSARDVHDYRDREARDAHARDVRDARDARDARDARDIRDVRDVRDVRDVRDVRDVRDVRDVRDVRDARDVRDVRDARDVRDVRDVRDGHRKEDVYQEEARSYGRNHLREESSRVELRNDSRNESRSEIRNDRMGRSRGRGPELPEKGSRGTRGSQMDSHSSGSNYHDSWETRSSYPERDRYPERDTRDPARDSSFERRHGERDRRDNRERDQRPSSPIRHQGRSEELERDERREERRIDRVDERRDDRVRDRDRDREREREREREREREREKERERELERERAREREREREKERERERERERDQRDRDHDREREREREREREKEREREREERERERERERERERERERERERERERERERERAREREKERERQREWEDKDKGRDDRREKREDIHVREDRIPRDSHEERKSKKRYRNEGSPSPRQSPKRRREHSPDSDTYHSGDDKNEKHRLLSQVVRPQESRSLSPSHLTEDRQGRWKEEDRKSERKESSRRYEEQELKEKLSCGDRQREQAESVDSSRVRAQDLLSHRQAEDRDRDGSDRAHDEKKKAKAPKKPVKKKKEEDVGVERGNLETHEDSQVFSPKKGQKKKNIEKKRKRSKGDSDVSDEEAAPQNKKKRGPRTPPLAIKEELADISTDKDGVLEDPLKKENTAFSDWSDEDVPDRTEGLEAEHTAATATPGSTPSPLSSLLPPPPPVAAASTAATALASSAVSATTSATSSSSAATSNTNGSEDSHRKCHRARGEKVEVSHVTLEDTPHRKLVDQKRSSSLGSNRSHRSHTSGRLRSPSNDSAHRSGDDQGSRKRVLHSGSRDREKTKSLEITGERKSRIDQLKRGEPSRSTSSDRQDSRSHSSRRSSPESDRQVHSRSGSFDSRDRLQERDRYEHDRERERDRRDPRQREWDREAEKEWPRTRDRDRLRERDRDRDRRRDLDRERERLISDPMERDRERERTFETSQLESGKRSEVKLESEHERDLEGSSRDSVALDKERMDRDLGSVQGFEDVSKAERTESLEGDDESKLDDAHSLGSGAGEGYEPISDDELDEILAGDAEKREDQQEEEKMPDPLDVIDVDWSGLMPKHPKEPREPGAALLKFTPGAVLLRVGISKKLAGSELFTKVKETCQQLVEKPKDADSLFEHELGALNMAALLRKEERASLLSDLGPCCKALCFRRDSAIRKQLVKNEKGTVKQAYTNTPMVDNELLRLSLRLFKKKATCHAPGQEKTEDGKLGPCSIQQELCVS.

2 disordered regions span residues 1-40 (MSKIRRKVTVENTKTISESTSRRPSVFERLGPSTGSTTET) and 57-156 (CRFI…NGDI). The segment covering 10–23 (VENTKTISESTSRR) has biased composition (polar residues). A C3H1-type zinc finger spans residues 36–64 (STTETQCRNWLKTGSCLYGNTCRFIHGPS). Residues serine 64 and serine 77 each carry the phosphoserine modification. A compositionally biased stretch (basic and acidic residues) spans 76–136 (RSPERPTGDL…IKIVKERTPE (61 aa)). The stretch at 162–196 (HELSLEMKRQKIQRELMKLEQENMDKREEIIIQKE) forms a coiled coil. A Glycyl lysine isopeptide (Lys-Gly) (interchain with G-Cter in SUMO2) cross-link involves residue lysine 179. Over residues 182–193 (QENMDKREEIII) the composition is skewed to basic and acidic residues. 2 disordered regions span residues 182 to 528 (QENM…IRDV) and 581 to 1527 (DVYQ…PISD). Phosphoserine occurs at positions 198, 207, 209, and 211. Over residues 204–213 (SKLSPSPSLR) the composition is skewed to low complexity. Residues 214–224 (KSSKSPKRKSS) show a composition bias toward basic residues. A Phosphoserine modification is found at serine 242. Polar residues predominate over residues 245-254 (LDQQRNSKGN). Threonine 263 is subject to Phosphothreonine. A Phosphoserine modification is found at serine 265. Over residues 283-315 (KYKVKDRIEEKPRDGKDRGRDFEKQREKRDKPR) the composition is skewed to basic and acidic residues. 4 positions are modified to phosphoserine: serine 316, serine 318, serine 324, and serine 327. Over residues 321 to 345 (QHHSPLSSRHHSSSSQSGSSIQRHS) the composition is skewed to low complexity. Threonine 353 and threonine 363 each carry phosphothreonine. Positions 358–368 (YQRTLTPSLRR) are enriched in polar residues. Serine 369, serine 371, and serine 380 each carry phosphoserine. Basic and acidic residues-rich tracts occupy residues 393-528 (PMRE…IRDV) and 581-636 (DVYQ…EKGS). Polar residues predominate over residues 639 to 654 (TRGSQMDSHSSGSNYH). Residues 655-701 (DSWETRSSYPERDRYPERDTRDPARDSSFERRHGERDRRDNRERDQR) show a composition bias toward basic and acidic residues. Position 704 is a phosphoserine (serine 704). Residues 706–865 (IRHQGRSEEL…KERERQREWE (160 aa)) adopt a coiled-coil conformation. Over residues 710 to 897 (GRSEELERDE…IPRDSHEERK (188 aa)) the composition is skewed to basic and acidic residues. Serine 907, serine 909, serine 913, serine 921, serine 924, serine 929, serine 949, serine 951, and serine 953 each carry phosphoserine. Basic and acidic residues predominate over residues 920–938 (HSPDSDTYHSGDDKNEKHR). The span at 957-1035 (LTEDRQGRWK…GSDRAHDEKK (79 aa)) shows a compositional bias: basic and acidic residues. The residue at position 958 (threonine 958) is a Phosphothreonine. Positions 1036–1046 (KAKAPKKPVKK) are enriched in basic residues. Positions 1047-1065 (KKEEDVGVERGNLETHEDS) are enriched in basic and acidic residues. Residues serine 1069, serine 1086, serine 1090, and serine 1093 each carry the phosphoserine modification. A compositionally biased stretch (basic residues) spans 1072-1086 (KGQKKKNIEKKRKRS). At threonine 1109 the chain carries Phosphothreonine. Composition is skewed to basic and acidic residues over residues 1114-1137 (IKEELADISTDKDGVLEDPLKKEN) and 1149-1159 (PDRTEGLEAEH). Low complexity-rich tracts occupy residues 1160 to 1176 (TAATATPGSTPSPLSSL) and 1184 to 1218 (AAASTAATALASSAVSATTSATSSSSAATSNTNGS). Over residues 1228-1253 (ARGEKVEVSHVTLEDTPHRKLVDQKR) the composition is skewed to basic and acidic residues. Phosphoserine occurs at positions 1256, 1259, 1273, and 1275. Over residues 1278 to 1288 (SAHRSGDDQGS) the composition is skewed to basic and acidic residues. Serine 1295 is modified (phosphoserine). Composition is skewed to basic and acidic residues over residues 1296-1351 (GSRD…DRQV) and 1359-1440 (DSRD…ERTF). 7 positions are modified to phosphoserine: serine 1427, serine 1443, serine 1447, serine 1467, serine 1470, serine 1499, and serine 1526. Basic and acidic residues-rich tracts occupy residues 1447–1482 (SGKRSEVKLESEHERDLEGSSRDSVALDKERMDRDL) and 1490–1499 (DVSKAERTES).

This sequence belongs to the ZC3H13 family. As to quaternary structure, component of the WMM complex, a N6-methyltransferase complex composed of a catalytic subcomplex, named MAC, and of an associated subcomplex, named MACOM. The MAC subcomplex is composed of METTL3 and METTL14. The MACOM subcomplex is composed of WTAP, ZC3H13, CBLL1/HAKAI, VIRMA, and, in some cases of RBM15 (RBM15 or RBM15B). Also a component of a MACOM-like complex, named WTAP complex, composed of WTAP, ZC3H13, CBLL1/HAKAI, VIRMA, RBM15, BCLAF1 and THRAP3.

The protein localises to the nucleus speckle. Its subcellular location is the nucleus. It localises to the nucleoplasm. Functionally, associated component of the WMM complex, a complex that mediates N6-methyladenosine (m6A) methylation of RNAs, a modification that plays a role in the efficiency of mRNA splicing and RNA processing. Acts as a key regulator of m6A methylation by promoting m6A methylation of mRNAs at the 3'-UTR. Controls embryonic stem cells (ESCs) pluripotency via its role in m6A methylation. In the WMM complex, anchors component of the MACOM subcomplex in the nucleus. Also required for bridging WTAP to the RNA-binding component RBM15 (RBM15 or RBM15B). In Mus musculus (Mouse), this protein is Zinc finger CCCH domain-containing protein 13.